The sequence spans 1225 residues: MVDVNRFKSMQITLASPSKVRSWSYGEVKKPETINYRTLKPEREGLFDEVIFGPTKDWECACGKYKRIRYRGIVCDRCGVEVTRTKVRRERMGHIELKAPVSHIWYFKGIPSRMGLTLDMSPRALEEVIYFAAYVVIDPKDTPLEHKSIMTEREYRERLREYGYGSFVAKMGAEAIQDLLKQVDLEKEIAELKEELKTATGQKRVKAIRRLDVLDAFYKSGNKPEWMILNILPVIPPDLRPMLQLDGGRFASSDLNDLYRRVINRNNRLARLLELNAPGIIVQNEKRMLQEAVDALIDNGRRGRPITGPGSRPLKSLSHMLKGKQGRFRQNLLGKRVDFSGRSVIAVGPTLKMYQCGVPREMAIELFKPFVMREIVARDIVQNVKAAKRLVERGDERIWDILEEVIKEHPVLLNRAPTLHRLGIQAFEPVLIDGKALRLHPLVCEAYNADFDGDQMAIHVPLSEEAQAEARILMLAAEHILNPKDGKPVVTPSQDMVLGNYYLTMEEAGREGEGMVFKDRDEAVMAYRNGYVHLHSRVGIATDSLNKPWTEEQRHKVLLTTVGKILFNDIMPEGLPYLQEPNNANLTEGVPAKYFLPLGGAIKEAISNLELNPPFKKKNLGNIIAEIFKRFRTTETSALLDRMKNLGYHHSTLAGLTVGIADIPVVDDKAEIIEESHKRVEQITKQFRRGMITDDERYNAVTAEWRAAREKLEKRLIANQDPKNPIVMMMDSGARGNISNFSQLAGMRGLMAAPNGRIMELPILSNFREGLSVLEMFFSTHGARKGMTDTALKTADSGYLTRRLVDVAQDVIIREDDCGTDRGLLIRSIAEGKEMIESLEERLNGRYTKKTVKHPETGAVIIGPNELITEDKAREIVNAGVEEVTIRSVFTCNTRHGVCRHCYGINLATGDAVEVGEAVGTIAAQSIGEPGTQLTMRTFHTGGVASNTDITQGLPRVQEIFEARNPKGEAVITEVKGQVTAIEEDASTRTKKVFVKGETGEGEYVVPFTARMRVEVGGQVARGAALTEGSIQPKRLLAVRDVLSVETYLLGEVQKVYRSQGVEIGDKHIEVMVRQMIRKVRVMDPGDTDLLMGTLMDINDFTDANKDVLIAGGVPATGRPVLMGITKASLETNSFLSAASFQETTRVLTDAAIRGKKDHLLGLKENVIIGKIIPAGTGMARYRNLEPHAVNEEEYLNPPVEEEGNEETTEVVVDTAVETVEETVE.

Residues Cys-60, Cys-62, Cys-75, and Cys-78 each contribute to the Zn(2+) site. Residues Asp-450, Asp-452, and Asp-454 each coordinate Mg(2+). 4 residues coordinate Zn(2+): Cys-818, Cys-892, Cys-899, and Cys-902.

It belongs to the RNA polymerase beta' chain family. As to quaternary structure, the RNAP catalytic core consists of 2 alpha, 1 beta, 1 beta' and 1 omega subunit. When a sigma factor is associated with the core the holoenzyme is formed, which can initiate transcription. Requires Mg(2+) as cofactor. Zn(2+) serves as cofactor.

The enzyme catalyses RNA(n) + a ribonucleoside 5'-triphosphate = RNA(n+1) + diphosphate. DNA-dependent RNA polymerase catalyzes the transcription of DNA into RNA using the four ribonucleoside triphosphates as substrates. This Streptococcus pneumoniae (strain ATCC 700669 / Spain 23F-1) protein is DNA-directed RNA polymerase subunit beta'.